The primary structure comprises 338 residues: 1-aminocyclopropane-1-carboxylate deaminase (338 aa).

K51 carries the N6-(pyridoxal phosphate)lysine modification. S78 acts as the Nucleophile in catalysis.

This sequence belongs to the ACC deaminase/D-cysteine desulfhydrase family. Pyridoxal 5'-phosphate serves as cofactor.

It catalyses the reaction 1-aminocyclopropane-1-carboxylate + H2O = 2-oxobutanoate + NH4(+). Functionally, catalyzes a cyclopropane ring-opening reaction, the irreversible conversion of 1-aminocyclopropane-1-carboxylate (ACC) to ammonia and alpha-ketobutyrate. Allows growth on ACC as a nitrogen source. The sequence is that of 1-aminocyclopropane-1-carboxylate deaminase from Enterobacter cloacae.